The following is a 373-amino-acid chain: GTP cyclohydrolase 1 type 2 homolog (373 aa).

Positions 67, 68, 106, 333, and 336 each coordinate a divalent metal cation.

It belongs to the GTP cyclohydrolase I type 2/NIF3 family. As to quaternary structure, homohexamer.

The sequence is that of GTP cyclohydrolase 1 type 2 homolog from Listeria innocua serovar 6a (strain ATCC BAA-680 / CLIP 11262).